The following is a 429-amino-acid chain: 3-phosphoshikimate 1-carboxyvinyltransferase (429 aa).

K21, S22, and R26 together coordinate 3-phosphoshikimate. Residue K21 coordinates phosphoenolpyruvate. Phosphoenolpyruvate-binding residues include G94 and R122. Residues S167, Q169, D315, and K342 each contribute to the 3-phosphoshikimate site. Residue Q169 participates in phosphoenolpyruvate binding. D315 acts as the Proton acceptor in catalysis. Phosphoenolpyruvate-binding residues include R346 and R388.

The protein belongs to the EPSP synthase family. As to quaternary structure, monomer.

Its subcellular location is the cytoplasm. The catalysed reaction is 3-phosphoshikimate + phosphoenolpyruvate = 5-O-(1-carboxyvinyl)-3-phosphoshikimate + phosphate. Its pathway is metabolic intermediate biosynthesis; chorismate biosynthesis; chorismate from D-erythrose 4-phosphate and phosphoenolpyruvate: step 6/7. In terms of biological role, catalyzes the transfer of the enolpyruvyl moiety of phosphoenolpyruvate (PEP) to the 5-hydroxyl of shikimate-3-phosphate (S3P) to produce enolpyruvyl shikimate-3-phosphate and inorganic phosphate. The sequence is that of 3-phosphoshikimate 1-carboxyvinyltransferase from Desulforudis audaxviator (strain MP104C).